A 308-amino-acid polypeptide reads, in one-letter code: 34.2 kDa protein in rubredoxin operon (308 aa).

Residues Cys-136 and Cys-139 are joined by a disulfide bond. 268–278 (TNIKGVFAAGD) provides a ligand contact to FAD.

This sequence belongs to the class-II pyridine nucleotide-disulfide oxidoreductase family.

The chain is 34.2 kDa protein in rubredoxin operon from Clostridium pasteurianum.